The sequence spans 80 residues: Conotoxin VnMSGL-0123 (80 aa).

The first 20 residues, 1 to 20 (MSGLGIMVLTLLLLVSMATS), serve as a signal peptide directing secretion. Positions 21–44 (HQDGGGKQATQRDAINVRRRRSIT) are excised as a propeptide. 3 disulfide bridges follow: Cys-53/Cys-65, Cys-57/Cys-74, and Cys-64/Cys-78. Phe-79 is modified (phenylalanine amide).

Belongs to the conotoxin O3 superfamily. As to expression, expressed by the venom duct.

The protein localises to the secreted. This chain is Conotoxin VnMSGL-0123, found in Conus ventricosus (Mediterranean cone).